The following is a 554-amino-acid chain: MSQPRAEHVTKFVFVTGGVASSLGKGLTASSLGQLLTARGLKVTMQKLDPYLNVDPGTMNPFQHGEVFVTDDGAETDLDLGHYERFLNRNLSGNANVTTGQVYSEVIAKERRGEYLGDTVQVIPHITDEIKHRILTMDRPDENGVRPDIVITEIGGTVGDIESQPFLEAARQTRHDVGRENIFFIHVSLVPYLAPSGELKTKPTQHSVAALRSIGIVPDALVLRCDREVPEPLKAKIALMCDVDQEGVISCADADSIYEIPKVLHREHLDAFLIRRLDLPFRDVDWEEWDSLLRKVHEPEHELTVALVGKYIDLPDAYLSVTEAIRAGGFANNARARVKWVPSDLCQTEEGAEKELGNVDAIVVPGGFGIRGIEGKIGAVRYARTHRVPFLGLCLGLQCMVIEAARAAGITDASSTEFDPQTTEPVVSTMAEQMAAVSGEADLGGTMRLGAYPAVLDKGSVVAEAYQTLEVSERHRHRYEINNAYRQRITDGVGLKFSGTSPDGKLVEFIEYPDHPYMVATQAHPEYKSRPTKAHPLFTALVKAGLKHKNDEEK.

Positions Met-1–Leu-279 are amidoligase domain. Ser-21 serves as a coordination point for CTP. Residue Ser-21 coordinates UTP. Residues Ser-22–Leu-27 and Asp-79 contribute to the ATP site. Mg(2+)-binding residues include Asp-79 and Glu-153. Residues Asp-160 to Glu-162, Lys-200 to Gln-205, and Lys-236 contribute to the CTP site. UTP is bound by residues Lys-200–Gln-205 and Lys-236. In terms of domain architecture, Glutamine amidotransferase type-1 spans Thr-304 to Asp-551. Position 367 (Gly-367) interacts with L-glutamine. Cys-394 serves as the catalytic Nucleophile; for glutamine hydrolysis. L-glutamine is bound by residues Leu-395–Gln-398, Glu-417, and Arg-478. Residues His-524 and Glu-526 contribute to the active site.

The protein belongs to the CTP synthase family. As to quaternary structure, homotetramer.

It catalyses the reaction UTP + L-glutamine + ATP + H2O = CTP + L-glutamate + ADP + phosphate + 2 H(+). It carries out the reaction L-glutamine + H2O = L-glutamate + NH4(+). The enzyme catalyses UTP + NH4(+) + ATP = CTP + ADP + phosphate + 2 H(+). The protein operates within pyrimidine metabolism; CTP biosynthesis via de novo pathway; CTP from UDP: step 2/2. Allosterically activated by GTP, when glutamine is the substrate; GTP has no effect on the reaction when ammonia is the substrate. The allosteric effector GTP functions by stabilizing the protein conformation that binds the tetrahedral intermediate(s) formed during glutamine hydrolysis. Inhibited by the product CTP, via allosteric rather than competitive inhibition. Functionally, catalyzes the ATP-dependent amination of UTP to CTP with either L-glutamine or ammonia as the source of nitrogen. Regulates intracellular CTP levels through interactions with the four ribonucleotide triphosphates. In Corynebacterium kroppenstedtii (strain DSM 44385 / JCM 11950 / CIP 105744 / CCUG 35717), this protein is CTP synthase.